Consider the following 160-residue polypeptide: Large ribosomal subunit protein uL10 (160 aa).

This sequence belongs to the universal ribosomal protein uL10 family. In terms of assembly, part of the ribosomal stalk of the 50S ribosomal subunit. The N-terminus interacts with L11 and the large rRNA to form the base of the stalk. The C-terminus forms an elongated spine to which L12 dimers bind in a sequential fashion forming a multimeric L10(L12)X complex.

In terms of biological role, forms part of the ribosomal stalk, playing a central role in the interaction of the ribosome with GTP-bound translation factors. The chain is Large ribosomal subunit protein uL10 from Wolinella succinogenes (strain ATCC 29543 / DSM 1740 / CCUG 13145 / JCM 31913 / LMG 7466 / NCTC 11488 / FDC 602W) (Vibrio succinogenes).